The following is a 317-amino-acid chain: Ribosomal RNA small subunit methyltransferase H (317 aa).

Residues 39–41 (GGH), Asp-59, Phe-83, Asp-104, and Gln-111 contribute to the S-adenosyl-L-methionine site.

The protein belongs to the methyltransferase superfamily. RsmH family.

It localises to the cytoplasm. The catalysed reaction is cytidine(1402) in 16S rRNA + S-adenosyl-L-methionine = N(4)-methylcytidine(1402) in 16S rRNA + S-adenosyl-L-homocysteine + H(+). Specifically methylates the N4 position of cytidine in position 1402 (C1402) of 16S rRNA. This chain is Ribosomal RNA small subunit methyltransferase H, found in Paraburkholderia xenovorans (strain LB400).